The chain runs to 96 residues: Molybdopterin synthase sulfur carrier subunit (96 aa).

At glycine 96 the chain carries 1-thioglycine; alternate. Glycine 96 is subject to Glycyl adenylate; alternate.

It belongs to the MoaD family. MOCS2A subfamily. In terms of assembly, heterotetramer; composed of 2 small (MOCS2A) and 2 large (MOCS2B) subunits. In terms of processing, C-terminal thiocarboxylation occurs in 2 steps, it is first acyl-adenylated (-COAMP) via the hesA/moeB/thiF part of UBA4, then thiocarboxylated (-COSH) via the rhodanese domain of UBA4.

The protein resides in the cytoplasm. It participates in cofactor biosynthesis; molybdopterin biosynthesis. Functionally, acts as a sulfur carrier required for molybdopterin biosynthesis. Component of the molybdopterin synthase complex that catalyzes the conversion of precursor Z into molybdopterin by mediating the incorporation of 2 sulfur atoms into precursor Z to generate a dithiolene group. In the complex, serves as sulfur donor by being thiocarboxylated (-COSH) at its C-terminus by UBA4. After interaction with MOCS2B, the sulfur is then transferred to precursor Z to form molybdopterin. In Phaeosphaeria nodorum (strain SN15 / ATCC MYA-4574 / FGSC 10173) (Glume blotch fungus), this protein is Molybdopterin synthase sulfur carrier subunit.